The sequence spans 183 residues: Probable cobalt-precorrin-6B C(15)-methyltransferase (decarboxylating) (183 aa).

S-adenosyl-L-methionine is bound by residues threonine 19, glycine 43–glycine 47, aspartate 64, and alanine 92.

The protein belongs to the methyltransferase superfamily. Archaeal-type CbiT family.

The catalysed reaction is Co-precorrin-6B + S-adenosyl-L-methionine = Co-precorrin-7 + S-adenosyl-L-homocysteine + CO2. The protein operates within cofactor biosynthesis; adenosylcobalamin biosynthesis; cob(II)yrinate a,c-diamide from sirohydrochlorin (anaerobic route): step 8/10. Catalyzes the methylation of C-15 in cobalt-precorrin-6B followed by the decarboxylation of C-12 to form cobalt-precorrin-7. This is Probable cobalt-precorrin-6B C(15)-methyltransferase (decarboxylating) from Methanocaldococcus jannaschii (strain ATCC 43067 / DSM 2661 / JAL-1 / JCM 10045 / NBRC 100440) (Methanococcus jannaschii).